The sequence spans 469 residues: Glutamate--tRNA ligase (469 aa).

Positions 11-21 match the 'HIGH' region motif; sequence PSPTGFIHLGN. Residues 118-131 are compositionally biased toward basic and acidic residues; it reads GEKPRYDGTWRPEP. The segment at 118-139 is disordered; that stretch reads GEKPRYDGTWRPEPGKVLPEPP. The 'KMSKS' region motif lies at 243–247; the sequence is KMSKR. Residue Lys-246 participates in ATP binding.

This sequence belongs to the class-I aminoacyl-tRNA synthetase family. Glutamate--tRNA ligase type 1 subfamily. Monomer.

Its subcellular location is the cytoplasm. It carries out the reaction tRNA(Glu) + L-glutamate + ATP = L-glutamyl-tRNA(Glu) + AMP + diphosphate. In terms of biological role, catalyzes the attachment of glutamate to tRNA(Glu) in a two-step reaction: glutamate is first activated by ATP to form Glu-AMP and then transferred to the acceptor end of tRNA(Glu). This is Glutamate--tRNA ligase from Burkholderia pseudomallei (strain 1106a).